The chain runs to 216 residues: ATP-dependent Clp protease proteolytic subunit (216 aa).

The Nucleophile role is filled by serine 101. The active site involves histidine 126.

It belongs to the peptidase S14 family. In terms of assembly, component of the chloroplastic Clp protease core complex.

It localises to the plastid. The protein resides in the chloroplast stroma. It carries out the reaction Hydrolysis of proteins to small peptides in the presence of ATP and magnesium. alpha-casein is the usual test substrate. In the absence of ATP, only oligopeptides shorter than five residues are hydrolyzed (such as succinyl-Leu-Tyr-|-NHMec, and Leu-Tyr-Leu-|-Tyr-Trp, in which cleavage of the -Tyr-|-Leu- and -Tyr-|-Trp bonds also occurs).. Functionally, cleaves peptides in various proteins in a process that requires ATP hydrolysis. Has a chymotrypsin-like activity. Plays a major role in the degradation of misfolded proteins. In Saccharum hybrid (Sugarcane), this protein is ATP-dependent Clp protease proteolytic subunit.